Consider the following 758-residue polypeptide: General transcription and DNA repair factor IIH helicase subunit XPD (758 aa).

The Helicase ATP-binding domain occupies 7–285 (DVTVYFPYDN…TDAGRLRAEY (279 aa)). Residue 42-49 (MPTGTGKT) coordinates ATP. [4Fe-4S] cluster-binding residues include Cys-116, Cys-134, Cys-155, and Cys-190. The short motif at 234–238 (DEAHN) is the DEAH box element.

This sequence belongs to the helicase family. RAD3/XPD subfamily. As to quaternary structure, component of the 7-subunit TFIIH core complex composed of XPB, XPD, TFB1/GTF2H1, GTF2H2/P44, TFB4/GTF2H3, TFB2/GTF2H4 and TFB5/GTF2H5, which is active in NER. The core complex associates with the 3-subunit CDK-activating kinase (CAK) module composed of CYCH1/cyclin H1, CDKD and MAT1/At4g30820 to form the 10-subunit holoenzyme (holo-TFIIH) active in transcription. Interacts with GTF2H2/p44. The cofactor is [4Fe-4S] cluster. In terms of tissue distribution, expressed at low levels in all tissues.

It localises to the nucleus. It carries out the reaction Couples ATP hydrolysis with the unwinding of duplex DNA at the replication fork by translocating in the 5'-3' direction. This creates two antiparallel DNA single strands (ssDNA). The leading ssDNA polymer is the template for DNA polymerase III holoenzyme which synthesizes a continuous strand.. The catalysed reaction is ATP + H2O = ADP + phosphate + H(+). Its function is as follows. ATP-dependent 5'-3' DNA helicase, component of the general transcription and DNA repair factor IIH (TFIIH) core complex, which is involved in general and transcription-coupled nucleotide excision repair (NER) of damaged DNA and, when complexed to CDK-activating kinase (CAK), involved in transcription by RNA polymerase II. In NER, TFIIH acts by opening DNA around the lesion to allow the excision of the damaged oligonucleotide and its replacement by a new DNA fragment. The ATP-dependent helicase activity of XPD is required for DNA opening. In transcription, TFIIH has an essential role in transcription initiation. When the pre-initiation complex (PIC) has been established, TFIIH is required for promoter opening and promoter escape. Phosphorylation of the C-terminal tail (CTD) of the largest subunit of RNA polymerase II by the kinase module CAK controls the initiation of transcription. XPD acts by forming a bridge between CAK and the core-TFIIH complex. Essential during plant growth. May negatively regulate a common response program mediated by UV damage and heat stress, that leads to tissue death and reduced chloroplast function. This Arabidopsis thaliana (Mouse-ear cress) protein is General transcription and DNA repair factor IIH helicase subunit XPD.